Reading from the N-terminus, the 118-residue chain is Large ribosomal subunit protein uL22 (118 aa).

The protein belongs to the universal ribosomal protein uL22 family. As to quaternary structure, part of the 50S ribosomal subunit.

This protein binds specifically to 23S rRNA; its binding is stimulated by other ribosomal proteins, e.g. L4, L17, and L20. It is important during the early stages of 50S assembly. It makes multiple contacts with different domains of the 23S rRNA in the assembled 50S subunit and ribosome. Its function is as follows. The globular domain of the protein is located near the polypeptide exit tunnel on the outside of the subunit, while an extended beta-hairpin is found that lines the wall of the exit tunnel in the center of the 70S ribosome. This Prosthecochloris aestuarii (strain DSM 271 / SK 413) protein is Large ribosomal subunit protein uL22.